The primary structure comprises 362 residues: GTPase Obg (362 aa).

The region spanning 1–159 is the Obg domain; sequence MKFIDEARIE…RKLKLELKVL (159 aa). Residues 129 to 148 form a disordered region; that stretch reads HFKSSTNRAPRQKTNGKEGE. Positions 130-141 are enriched in polar residues; sequence FKSSTNRAPRQK. Residues 160-334 enclose the OBG-type G domain; it reads ADVGLLGMPN…LCYALQDYLD (175 aa). GTP-binding positions include 166–173, 191–195, 213–216, 284–287, and 315–317; these read GMPNAGKS, FTTLH, DIPG, NKVD, and SAL. Residues Ser-173 and Thr-193 each contribute to the Mg(2+) site. Residues 340–362 form a disordered region; that stretch reads RDDAEERAADPRYQDQAADKSPD.

The protein belongs to the TRAFAC class OBG-HflX-like GTPase superfamily. OBG GTPase family. Monomer. The cofactor is Mg(2+).

The protein resides in the cytoplasm. Its function is as follows. An essential GTPase which binds GTP, GDP and possibly (p)ppGpp with moderate affinity, with high nucleotide exchange rates and a fairly low GTP hydrolysis rate. Plays a role in control of the cell cycle, stress response, ribosome biogenesis and in those bacteria that undergo differentiation, in morphogenesis control. The polypeptide is GTPase Obg (Polynucleobacter asymbioticus (strain DSM 18221 / CIP 109841 / QLW-P1DMWA-1) (Polynucleobacter necessarius subsp. asymbioticus)).